Reading from the N-terminus, the 185-residue chain is MRRYETIFISDPDLPEDNRATLFEKMQGLIAEHDGYIAFFDEWGARKLAYEVKKKKRGYYVLMDFCAEGSLIAEMERIMRIDDRILKFLTIQTEEEVDLDAVKEQVAKAKAEKEAAQKAAAEKAEAARLEAEKAAEEEAAKAAEAQAKEAPAAEAPAEEAPAAEAPAEAPAEEPAEEPKSDEEDA.

Basic and acidic residues predominate over residues 115–141 (AAQKAAAEKAEAARLEAEKAAEEEAAK). The segment at 115–185 (AAQKAAAEKA…EEPKSDEEDA (71 aa)) is disordered. The span at 142-169 (AAEAQAKEAPAAEAPAEEAPAAEAPAEA) shows a compositional bias: low complexity. The span at 170 to 185 (PAEEPAEEPKSDEEDA) shows a compositional bias: acidic residues.

This sequence belongs to the bacterial ribosomal protein bS6 family.

Its function is as follows. Binds together with bS18 to 16S ribosomal RNA. This Desulfatibacillum aliphaticivorans protein is Small ribosomal subunit protein bS6.